Here is a 221-residue protein sequence, read N- to C-terminus: Casparian strip membrane protein 2 (221 aa).

A disordered region spans residues 1–21; that stretch reads MEKSEATTIEIGETSRESKGK. Residues 1 to 41 are Cytoplasmic-facing; that stretch reads MEKSEATTIEIGETSRESKGKTPLLAEVEQTARTAGSYRRG. The helical transmembrane segment at 42–62 threads the bilayer; the sequence is VAIFDLILRVSAATSALAATI. Topologically, residues 63–89 are extracellular; the sequence is TMGTTEQTLPFFTQFFQFQASYDDLPA. A helical membrane pass occupies residues 90–110; that stretch reads FTFFVIALSIVTGYLVLSVPF. The Cytoplasmic segment spans residues 111–131; sequence SVVCIAQPLAAVPRLLLIVCD. The chain crosses the membrane as a helical span at residues 132-152; it reads TLTVTLATAAASSSAAIVYLA. Over 153 to 221 the chain is Extracellular; the sequence is HNGNADANWL…HYWDRRWCEI (69 aa).

This sequence belongs to the Casparian strip membrane proteins (CASP) family. Homodimer and heterodimers.

The protein resides in the cell membrane. Functionally, regulates membrane-cell wall junctions and localized cell wall deposition. Required for establishment of the Casparian strip membrane domain (CSD) and the subsequent formation of Casparian strips, a cell wall modification of the root endodermis that determines an apoplastic barrier between the intraorganismal apoplasm and the extraorganismal apoplasm and prevents lateral diffusion. The chain is Casparian strip membrane protein 2 from Erythranthe guttata (Yellow monkey flower).